A 237-amino-acid chain; its full sequence is Phosphoribosylaminoimidazole-succinocarboxamide synthase (237 aa).

This sequence belongs to the SAICAR synthetase family.

It catalyses the reaction 5-amino-1-(5-phospho-D-ribosyl)imidazole-4-carboxylate + L-aspartate + ATP = (2S)-2-[5-amino-1-(5-phospho-beta-D-ribosyl)imidazole-4-carboxamido]succinate + ADP + phosphate + 2 H(+). The protein operates within purine metabolism; IMP biosynthesis via de novo pathway; 5-amino-1-(5-phospho-D-ribosyl)imidazole-4-carboxamide from 5-amino-1-(5-phospho-D-ribosyl)imidazole-4-carboxylate: step 1/2. This Edwardsiella ictaluri (strain 93-146) protein is Phosphoribosylaminoimidazole-succinocarboxamide synthase.